Reading from the N-terminus, the 744-residue chain is Collagen alpha-1(VIII) chain (744 aa).

The first 24 residues, 1–24 (MAVPPRPLQLLGILFIISLNSVRL), serve as a signal peptide directing secretion. The nonhelical region (NC2) stretch occupies residues 29 to 118 (AYYGIKPLPP…KGEVPLASLR (90 aa)). Residues 101–110 (KEVVPKKGKG) show a composition bias toward basic and acidic residues. 3 disordered regions span residues 101 to 395 (KEVV…EPGL), 412 to 439 (GPKG…GFPG), and 457 to 590 (GPIG…DMGL). The triple-helical region (COL1) stretch occupies residues 119 to 572 (GEQGPRGEPG…PGPPGPPGPP (454 aa)). Pro residues predominate over residues 129–138 (PRGPPGPPGL). Residues 169–191 (KPGAMGMPGAKGEIGPKGEIGPM) show a composition bias toward low complexity. The segment covering 204–218 (GLPGIGKPGGPGLPG) has biased composition (gly residues). Over residues 298 to 307 (PQGLIGVPGV) the composition is skewed to low complexity. 2 stretches are compositionally biased toward gly residues: residues 329–338 (GFPGGKGEQG) and 412–421 (GPKGEGGVVG). Composition is skewed to low complexity over residues 470–507 (LPGL…VGPS) and 548–557 (PGALGPQGQP). A compositionally biased stretch (pro residues) spans 559 to 579 (LPGPPGPPGPPGPPAVMPTPS). The nonhelical region (NC1) stretch occupies residues 573-744 (AVMPTPSPQG…SFSGYLLYPM (172 aa)). Residues 611–744 (PAYEMPAFTA…SFSGYLLYPM (134 aa)) form the C1q domain.

In terms of assembly, homotrimers, or heterotrimers in association with alpha 2(VIII) type collagens. Four homotrimers can form a tetrahedron stabilized by central interacting C-terminal NC1 trimers. In terms of processing, prolines at the third position of the tripeptide repeating unit (G-X-Y) are hydroxylated in some or all of the chains. Proteolytically cleaved by neutrophil elastase, in vitro. Proteolytic processing produces the C-terminal NC1 domain fragment, vastatin. As to expression, high levels in calvarium, eye and skin of newborn mice; also in various epithelial, endothelial and mesenchymal cells.

It is found in the secreted. It localises to the extracellular space. The protein resides in the extracellular matrix. Its subcellular location is the basement membrane. Functionally, macromolecular component of the subendothelium. Major component of the Descemet's membrane (basement membrane) of corneal endothelial cells. Also a component of the endothelia of blood vessels. Necessary for migration and proliferation of vascular smooth muscle cells and thus, has a potential role in the maintenance of vessel wall integrity and structure, in particular in atherogenesis. Vastatin, the C-terminal fragment comprising the NC1 domain, inhibits aortic endothelial cell proliferation and causes cell apoptosis. The sequence is that of Collagen alpha-1(VIII) chain (Col8a1) from Mus musculus (Mouse).